Here is a 394-residue protein sequence, read N- to C-terminus: MNDVSRIFPGFYIGSLPAVNRNTLDKYQITHVCSVLNEFQPKWTKIYKYLHIDIYDSPSVDIMKYFDKTFQFIEEGRKDGGVLVHCFAGISRSATICIAYIMRKLNISFEDAHGLVSDARPIIYPNESFIKQLKKYELILKKNRENPQIVEKESEEEDDDEDDDDDDYDSDEDDDDDSEDDDFEEEFDNVVKKKNNNNKKVNVKNTTKVFSNISISSEQTTTSTTTVPTPTLNPETKIEETTTTTTATATATLVEEVVESTSPKATLGEHRYSCRKCSKDLFLDFDILDHEQGQGQTSFKWNKRDNTTCNKSVGANGEQIEDQNKVICTSYFISEIEFSLSQTYSGMEGKLFCPSCNEKLGSWSWSGEQCSCGAWIAPSFQIPKTRVDEKKVLK.

Residues 2 to 142 (NDVSRIFPGF…LKKYELILKK (141 aa)) enclose the Tyrosine-protein phosphatase domain. Cys86 serves as the catalytic Phosphocysteine intermediate. The interval 147–191 (PQIVEKESEEEDDDEDDDDDDYDSDEDDDDDSEDDDFEEEFDNVV) is disordered. Residues 153–188 (ESEEEDDDEDDDDDDYDSDEDDDDDSEDDDFEEEFD) show a composition bias toward acidic residues.

It belongs to the protein-tyrosine phosphatase family. Non-receptor class dual specificity subfamily.

It carries out the reaction O-phospho-L-tyrosyl-[protein] + H2O = L-tyrosyl-[protein] + phosphate. The enzyme catalyses O-phospho-L-seryl-[protein] + H2O = L-seryl-[protein] + phosphate. It catalyses the reaction O-phospho-L-threonyl-[protein] + H2O = L-threonyl-[protein] + phosphate. Its function is as follows. Has a dual specificity toward Ser/Thr and Tyr-containing proteins. The protein is Probable dual specificity protein phosphatase DDB_G0281963 of Dictyostelium discoideum (Social amoeba).